We begin with the raw amino-acid sequence, 197 residues long: RNA pyrophosphohydrolase (197 aa).

Residues 6-149 (GYRPNVGIVI…KRDVYRKAMK (144 aa)) form the Nudix hydrolase domain. The Nudix box motif lies at 38–59 (GGINDGETPEQAMYRELYEEVG). The tract at residues 165-197 (LSTNNNDEKKANYSAKKPYSPYRNQDKKRKTRV) is disordered.

It belongs to the Nudix hydrolase family. RppH subfamily. A divalent metal cation is required as a cofactor.

Its function is as follows. Accelerates the degradation of transcripts by removing pyrophosphate from the 5'-end of triphosphorylated RNA, leading to a more labile monophosphorylated state that can stimulate subsequent ribonuclease cleavage. The sequence is that of RNA pyrophosphohydrolase from Mannheimia succiniciproducens (strain KCTC 0769BP / MBEL55E).